Here is a 251-residue protein sequence, read N- to C-terminus: Imidazole glycerol phosphate synthase subunit HisF (251 aa).

Active-site residues include D11 and D130.

This sequence belongs to the HisA/HisF family. As to quaternary structure, heterodimer of HisH and HisF.

The protein resides in the cytoplasm. The enzyme catalyses 5-[(5-phospho-1-deoxy-D-ribulos-1-ylimino)methylamino]-1-(5-phospho-beta-D-ribosyl)imidazole-4-carboxamide + L-glutamine = D-erythro-1-(imidazol-4-yl)glycerol 3-phosphate + 5-amino-1-(5-phospho-beta-D-ribosyl)imidazole-4-carboxamide + L-glutamate + H(+). Its pathway is amino-acid biosynthesis; L-histidine biosynthesis; L-histidine from 5-phospho-alpha-D-ribose 1-diphosphate: step 5/9. Functionally, IGPS catalyzes the conversion of PRFAR and glutamine to IGP, AICAR and glutamate. The HisF subunit catalyzes the cyclization activity that produces IGP and AICAR from PRFAR using the ammonia provided by the HisH subunit. The sequence is that of Imidazole glycerol phosphate synthase subunit HisF from Listeria monocytogenes serotype 4b (strain CLIP80459).